A 504-amino-acid chain; its full sequence is Anaerobic nitric oxide reductase transcription regulator NorR (504 aa).

Asp-57 bears the 4-aspartylphosphate mark. The region spanning 187–416 is the Sigma-54 factor interaction domain; sequence MIGLSPGMTQ…LEHAIHRAVV (230 aa). ATP contacts are provided by residues 215–222 and 278–287; these read GETGTGKE and ADNGTLFLDE. The segment at residues 479-498 is a DNA-binding region (H-T-H motif); it reads WAACARMLETDVANLHRLAK.

It functions in the pathway nitrogen metabolism; nitric oxide reduction. In terms of biological role, required for the expression of anaerobic nitric oxide (NO) reductase, acts as a transcriptional activator for at least the norVW operon. Activation also requires sigma-54. The chain is Anaerobic nitric oxide reductase transcription regulator NorR from Escherichia coli (strain ATCC 8739 / DSM 1576 / NBRC 3972 / NCIMB 8545 / WDCM 00012 / Crooks).